Reading from the N-terminus, the 204-residue chain is Small heat shock protein, chloroplastic (204 aa).

The segment at 34 to 55 (QMGRVDHDHELDDRSNRAPISR) is disordered. A compositionally biased stretch (basic and acidic residues) spans 37 to 49 (RVDHDHELDDRSN). The sHSP domain maps to 98-204 (GSGRAMRRGW…KKDVFQVMVD (107 aa)).

The protein belongs to the small heat shock protein (HSP20) family.

Its subcellular location is the plastid. The protein localises to the chloroplast stroma. The polypeptide is Small heat shock protein, chloroplastic (HSP23) (Oxybasis rubra (Red goosefoot)).